The primary structure comprises 367 residues: Histidinol-phosphate aminotransferase 1 (367 aa).

At Lys-229 the chain carries N6-(pyridoxal phosphate)lysine.

This sequence belongs to the class-II pyridoxal-phosphate-dependent aminotransferase family. Histidinol-phosphate aminotransferase subfamily. In terms of assembly, homodimer. The cofactor is pyridoxal 5'-phosphate.

It carries out the reaction L-histidinol phosphate + 2-oxoglutarate = 3-(imidazol-4-yl)-2-oxopropyl phosphate + L-glutamate. It functions in the pathway amino-acid biosynthesis; L-histidine biosynthesis; L-histidine from 5-phospho-alpha-D-ribose 1-diphosphate: step 7/9. This chain is Histidinol-phosphate aminotransferase 1, found in Idiomarina loihiensis (strain ATCC BAA-735 / DSM 15497 / L2-TR).